Reading from the N-terminus, the 363-residue chain is Fructose-bisphosphate aldolase (363 aa).

Substrate-binding residues include arginine 56 and lysine 147. The active-site Proton acceptor is glutamate 188. Lysine 230 functions as the Schiff-base intermediate with dihydroxyacetone-P in the catalytic mechanism.

This sequence belongs to the class I fructose-bisphosphate aldolase family.

It catalyses the reaction beta-D-fructose 1,6-bisphosphate = D-glyceraldehyde 3-phosphate + dihydroxyacetone phosphate. Its pathway is carbohydrate degradation; glycolysis; D-glyceraldehyde 3-phosphate and glycerone phosphate from D-glucose: step 4/4. The chain is Fructose-bisphosphate aldolase from Schistosoma mansoni (Blood fluke).